The following is a 411-amino-acid chain: Multifunctional CCA protein (411 aa).

2 residues coordinate ATP: G8 and R11. CTP is bound by residues G8 and R11. Mg(2+)-binding residues include D21 and D23. ATP-binding residues include R91, R137, and R140. CTP-binding residues include R91, R137, and R140. Residues 228 to 329 (CGIHTLMVAK…VNILDQIDSW (102 aa)) enclose the HD domain.

Belongs to the tRNA nucleotidyltransferase/poly(A) polymerase family. Bacterial CCA-adding enzyme type 1 subfamily. In terms of assembly, monomer. Can also form homodimers and oligomers. Mg(2+) is required as a cofactor. Requires Ni(2+) as cofactor.

The enzyme catalyses a tRNA precursor + 2 CTP + ATP = a tRNA with a 3' CCA end + 3 diphosphate. It catalyses the reaction a tRNA with a 3' CCA end + 2 CTP + ATP = a tRNA with a 3' CCACCA end + 3 diphosphate. In terms of biological role, catalyzes the addition and repair of the essential 3'-terminal CCA sequence in tRNAs without using a nucleic acid template. Adds these three nucleotides in the order of C, C, and A to the tRNA nucleotide-73, using CTP and ATP as substrates and producing inorganic pyrophosphate. tRNA 3'-terminal CCA addition is required both for tRNA processing and repair. Also involved in tRNA surveillance by mediating tandem CCA addition to generate a CCACCA at the 3' terminus of unstable tRNAs. While stable tRNAs receive only 3'-terminal CCA, unstable tRNAs are marked with CCACCA and rapidly degraded. The protein is Multifunctional CCA protein of Photobacterium profundum (strain SS9).